A 342-amino-acid polypeptide reads, in one-letter code: GTPase Obg (342 aa).

The 159-residue stretch at 1 to 159 folds into the Obg domain; it reads MQFIDRAEIE…RNLRLELKLL (159 aa). One can recognise an OBG-type G domain in the interval 160–328; sequence AEVGIIGLPN…LLQAIWHRLD (169 aa). Residues 166–173, 191–195, 213–216, 280–283, and 309–311 each bind GTP; these read GLPNAGKS, FTTLV, DIPG, NKVD, and SAV. Mg(2+) is bound by residues serine 173 and threonine 193.

The protein belongs to the TRAFAC class OBG-HflX-like GTPase superfamily. OBG GTPase family. In terms of assembly, monomer. Requires Mg(2+) as cofactor.

The protein resides in the cytoplasm. An essential GTPase which binds GTP, GDP and possibly (p)ppGpp with moderate affinity, with high nucleotide exchange rates and a fairly low GTP hydrolysis rate. Plays a role in control of the cell cycle, stress response, ribosome biogenesis and in those bacteria that undergo differentiation, in morphogenesis control. This chain is GTPase Obg, found in Crocosphaera subtropica (strain ATCC 51142 / BH68) (Cyanothece sp. (strain ATCC 51142)).